The following is a 345-amino-acid chain: Dihydroorotase (345 aa).

The Zn(2+) site is built by His-14 and His-16. Substrate contacts are provided by residues 16–18 (HLR) and Asn-42. Zn(2+) contacts are provided by Lys-102, His-139, and His-177. At Lys-102 the chain carries N6-carboxylysine. His-139 contacts substrate. Substrate is bound at residue Leu-222. Position 250 (Asp-250) interacts with Zn(2+). Residue Asp-250 is part of the active site. Substrate-binding residues include His-254 and Ala-266.

This sequence belongs to the metallo-dependent hydrolases superfamily. DHOase family. Class II DHOase subfamily. Homodimer. Requires Zn(2+) as cofactor.

It carries out the reaction (S)-dihydroorotate + H2O = N-carbamoyl-L-aspartate + H(+). The protein operates within pyrimidine metabolism; UMP biosynthesis via de novo pathway; (S)-dihydroorotate from bicarbonate: step 3/3. In terms of biological role, catalyzes the reversible cyclization of carbamoyl aspartate to dihydroorotate. This Nitrosomonas eutropha (strain DSM 101675 / C91 / Nm57) protein is Dihydroorotase.